The primary structure comprises 582 residues: Protein alan shepard (582 aa).

The segment covering methionine 1–glutamine 12 has biased composition (pro residues). Residues methionine 1 to phenylalanine 73 form a disordered region. Tyrosine 5 carries the post-translational modification Phosphotyrosine. A compositionally biased stretch (low complexity) spans glutamine 13–glutamine 24. Positions glutamine 25–methionine 35 are enriched in gly residues. A compositionally biased stretch (polar residues) spans glycine 37–glycine 57. Residues serine 58 to alanine 72 are compositionally biased toward low complexity. Residues tyrosine 125 and tyrosine 142 each carry the phosphotyrosine modification. A disordered region spans residues proline 164–glycine 225. The span at serine 178–glycine 225 shows a compositional bias: low complexity. 2 RRM domains span residues threonine 231 to glutamine 304 and threonine 310 to glycine 389. The interval proline 555–lysine 582 is disordered.

Its function is as follows. Has a role in the perception of gravity. The chain is Protein alan shepard from Drosophila erecta (Fruit fly).